The following is a 134-amino-acid chain: Holo-[acyl-carrier-protein] synthase (134 aa).

The Mg(2+) site is built by Asp-8 and Glu-56.

It belongs to the P-Pant transferase superfamily. AcpS family. Mg(2+) serves as cofactor.

Its subcellular location is the cytoplasm. The enzyme catalyses apo-[ACP] + CoA = holo-[ACP] + adenosine 3',5'-bisphosphate + H(+). Transfers the 4'-phosphopantetheine moiety from coenzyme A to a Ser of acyl-carrier-protein. The chain is Holo-[acyl-carrier-protein] synthase from Clostridium kluyveri (strain ATCC 8527 / DSM 555 / NBRC 12016 / NCIMB 10680 / K1).